The primary structure comprises 156 residues: MKLQLIAVGTKMPDWIQTGFMDYLNRFPKDMPLELIEIPAGKRGKNADIKRILEKEGEQMLAAVGKGNRIVTLDIPGARWDTPKLAEQLDRWKLDGRNVSLLIGGPEGLAPACKAAAEQSWSLSPLTMPHPLVRVVVAESLYRAWSITTNHPYHRE.

Residues Leu73, Gly104, and 123–128 (LSPLTM) each bind S-adenosyl-L-methionine.

Belongs to the RNA methyltransferase RlmH family. As to quaternary structure, homodimer.

It localises to the cytoplasm. The enzyme catalyses pseudouridine(1915) in 23S rRNA + S-adenosyl-L-methionine = N(3)-methylpseudouridine(1915) in 23S rRNA + S-adenosyl-L-homocysteine + H(+). In terms of biological role, specifically methylates the pseudouridine at position 1915 (m3Psi1915) in 23S rRNA. This chain is Ribosomal RNA large subunit methyltransferase H, found in Proteus mirabilis (strain HI4320).